The sequence spans 242 residues: MSGGYTSLESSIRTCKVNTGNADRIESDRFLGFPDKKTCPPFLGTDLTGRAICPDSFMTKSAGCNTPEDRIYIENTVSRPHYYEYINLSPRGMLNDETIEGFGFGQQESAYIREGFGTNGTSAQYGSNGNGGNGSCGLNNYRAPVNLNGWPRAGYGIGPEDIDDLPGDLRFNATQPGPFNNMPLWAFSVVPREYGMPYSQLYGQNAEDQRLKQALWARAEIMGQDPIVPGPSRYGYRMMGDY.

This sequence belongs to the IIV-6 415R family.

This is an uncharacterized protein from Invertebrate iridescent virus 6 (IIV-6).